Reading from the N-terminus, the 120-residue chain is NAD(P)H-quinone oxidoreductase subunit 3 (120 aa).

3 helical membrane-spanning segments follow: residues 10-30 (LLVF…ASAL), 64-84 (MFAL…PWAV), and 89-109 (LGLL…VGLV).

It belongs to the complex I subunit 3 family. NDH-1 can be composed of about 15 different subunits; different subcomplexes with different compositions have been identified which probably have different functions.

The protein resides in the cellular thylakoid membrane. It catalyses the reaction a plastoquinone + NADH + (n+1) H(+)(in) = a plastoquinol + NAD(+) + n H(+)(out). The enzyme catalyses a plastoquinone + NADPH + (n+1) H(+)(in) = a plastoquinol + NADP(+) + n H(+)(out). Its function is as follows. NDH-1 shuttles electrons from an unknown electron donor, via FMN and iron-sulfur (Fe-S) centers, to quinones in the respiratory and/or the photosynthetic chain. The immediate electron acceptor for the enzyme in this species is believed to be plastoquinone. Couples the redox reaction to proton translocation, and thus conserves the redox energy in a proton gradient. Cyanobacterial NDH-1 also plays a role in inorganic carbon-concentration. This is NAD(P)H-quinone oxidoreductase subunit 3 from Synechococcus sp. (strain JA-2-3B'a(2-13)) (Cyanobacteria bacterium Yellowstone B-Prime).